Consider the following 301-residue polypeptide: Methionyl-tRNA formyltransferase (301 aa).

Residue Ser-109–Pro-112 participates in (6S)-5,6,7,8-tetrahydrofolate binding.

This sequence belongs to the Fmt family.

It catalyses the reaction L-methionyl-tRNA(fMet) + (6R)-10-formyltetrahydrofolate = N-formyl-L-methionyl-tRNA(fMet) + (6S)-5,6,7,8-tetrahydrofolate + H(+). In terms of biological role, attaches a formyl group to the free amino group of methionyl-tRNA(fMet). The formyl group appears to play a dual role in the initiator identity of N-formylmethionyl-tRNA by promoting its recognition by IF2 and preventing the misappropriation of this tRNA by the elongation apparatus. This chain is Methionyl-tRNA formyltransferase, found in Anaplasma marginale (strain St. Maries).